A 116-amino-acid polypeptide reads, in one-letter code: Nucleoid-associated protein SACE_0254 (116 aa).

Positions 90–116 (LQQEKMGPVTGALGGGQGLGGLGLPGL) are disordered. Over residues 101–116 (ALGGGQGLGGLGLPGL) the composition is skewed to gly residues.

Belongs to the YbaB/EbfC family. As to quaternary structure, homodimer.

The protein resides in the cytoplasm. It is found in the nucleoid. Functionally, binds to DNA and alters its conformation. May be involved in regulation of gene expression, nucleoid organization and DNA protection. The polypeptide is Nucleoid-associated protein SACE_0254 (Saccharopolyspora erythraea (strain ATCC 11635 / DSM 40517 / JCM 4748 / NBRC 13426 / NCIMB 8594 / NRRL 2338)).